Reading from the N-terminus, the 87-residue chain is Large ribosomal subunit protein bL27 (87 aa).

The protein belongs to the bacterial ribosomal protein bL27 family.

The chain is Large ribosomal subunit protein bL27 from Pseudarthrobacter chlorophenolicus (strain ATCC 700700 / DSM 12829 / CIP 107037 / JCM 12360 / KCTC 9906 / NCIMB 13794 / A6) (Arthrobacter chlorophenolicus).